A 281-amino-acid chain; its full sequence is Bifunctional protein FolD (281 aa).

Residues 165-167, Thr192, and Val233 contribute to the NADP(+) site; that span reads GRG.

It belongs to the tetrahydrofolate dehydrogenase/cyclohydrolase family. Homodimer.

It catalyses the reaction (6R)-5,10-methylene-5,6,7,8-tetrahydrofolate + NADP(+) = (6R)-5,10-methenyltetrahydrofolate + NADPH. The enzyme catalyses (6R)-5,10-methenyltetrahydrofolate + H2O = (6R)-10-formyltetrahydrofolate + H(+). The protein operates within one-carbon metabolism; tetrahydrofolate interconversion. Catalyzes the oxidation of 5,10-methylenetetrahydrofolate to 5,10-methenyltetrahydrofolate and then the hydrolysis of 5,10-methenyltetrahydrofolate to 10-formyltetrahydrofolate. This is Bifunctional protein FolD from Mycobacteroides abscessus (strain ATCC 19977 / DSM 44196 / CCUG 20993 / CIP 104536 / JCM 13569 / NCTC 13031 / TMC 1543 / L948) (Mycobacterium abscessus).